A 69-amino-acid polypeptide reads, in one-letter code: Neurotoxin Cex3 (69 aa).

Residue Ala-1 is a signal peptide. Positions 2 to 67 constitute an LCN-type CS-alpha/beta domain; it reads KDGYLVNKST…TYPLPNKSCG (66 aa). 4 cysteine pairs are disulfide-bonded: Cys-13–Cys-66, Cys-17–Cys-42, Cys-26–Cys-47, and Cys-30–Cys-49. Cys-66 is subject to Cysteine amide. A propeptide spanning residues 67-69 is cleaved from the precursor; that stretch reads GRK.

The protein belongs to the long (4 C-C) scorpion toxin superfamily. Sodium channel inhibitor family. Beta subfamily. Expressed by the venom gland.

It localises to the secreted. Functionally, beta toxins bind voltage-independently at site-4 of sodium channels (Nav) and shift the voltage of activation toward more negative potentials thereby affecting sodium channel activation and promoting spontaneous and repetitive firing. In Centruroides exilicauda (Bark scorpion), this protein is Neurotoxin Cex3.